Consider the following 557-residue polypeptide: Probable asparagine synthetase [glutamine-hydrolyzing] (557 aa).

The active-site For GATase activity is Cys-2. Residues 2–188 (CGILAVHHVA…PGHYYDSETK (187 aa)) enclose the Glutamine amidotransferase type-2 domain. L-glutamine is bound by residues 50-54 (RLAIV), 75-77 (NGE), and Asp-99. An Asparagine synthetase domain is found at 196-531 (PSWWDENKIP…PRQCADTVMR (336 aa)). ATP contacts are provided by residues Leu-235, Ile-280, and 354–355 (SG). Ser-391 and Ser-489 each carry phosphoserine.

It localises to the cytoplasm. It is found in the nucleus. The enzyme catalyses L-aspartate + L-glutamine + ATP + H2O = L-asparagine + L-glutamate + AMP + diphosphate + H(+). The protein operates within amino-acid biosynthesis; L-asparagine biosynthesis; L-asparagine from L-aspartate (L-Gln route): step 1/1. The protein is Probable asparagine synthetase [glutamine-hydrolyzing] (asn1) of Schizosaccharomyces pombe (strain 972 / ATCC 24843) (Fission yeast).